The primary structure comprises 593 residues: Transcription factor ATEG_07667 (593 aa).

Residues 18 to 47 (CTQCYKAKCRCVRTPSGDTCERCIRLKKRC) constitute a DNA-binding region (zn(2)-C6 fungal-type).

It localises to the nucleus. Transcriptional regulator that regulates both the azasperpyranone A biosynthesis clusters A and B. Specifically up-regulates the expression of the cluster A and B specific transcription factors ATEG_03638 and ATEG_07666, which in turn activate the expression of their respective clusters. The polypeptide is Transcription factor ATEG_07667 (Aspergillus terreus (strain NIH 2624 / FGSC A1156)).